Reading from the N-terminus, the 231-residue chain is ATP phosphoribosyltransferase (231 aa).

Belongs to the ATP phosphoribosyltransferase family. Short subfamily. In terms of assembly, heteromultimer composed of HisG and HisZ subunits.

It localises to the cytoplasm. It carries out the reaction 1-(5-phospho-beta-D-ribosyl)-ATP + diphosphate = 5-phospho-alpha-D-ribose 1-diphosphate + ATP. It participates in amino-acid biosynthesis; L-histidine biosynthesis; L-histidine from 5-phospho-alpha-D-ribose 1-diphosphate: step 1/9. Catalyzes the condensation of ATP and 5-phosphoribose 1-diphosphate to form N'-(5'-phosphoribosyl)-ATP (PR-ATP). Has a crucial role in the pathway because the rate of histidine biosynthesis seems to be controlled primarily by regulation of HisG enzymatic activity. The protein is ATP phosphoribosyltransferase of Brucella suis biovar 1 (strain 1330).